The chain runs to 248 residues: Probable transcriptional regulatory protein RPC_4807 (248 aa).

A disordered region spans residues 1-21; that stretch reads MAGHSQFKNIMHRKGRQDAQK.

Belongs to the TACO1 family.

The protein localises to the cytoplasm. The protein is Probable transcriptional regulatory protein RPC_4807 of Rhodopseudomonas palustris (strain BisB18).